Consider the following 113-residue polypeptide: Hydrogenase maturation factor HybF (113 aa).

Ni(2+)-binding residues include His-2 and Glu-3. Zn(2+) is bound by residues Cys-73, Cys-76, Cys-89, and Cys-92.

The protein belongs to the HypA/HybF family. HybF subfamily.

Involved in the maturation of [NiFe] hydrogenases. Required for nickel insertion into the metal center of the hydrogenase. The polypeptide is Hydrogenase maturation factor HybF (Klebsiella pneumoniae).